The chain runs to 120 residues: uncharacterized protein (120 aa).

The protein to phage T4 y06Q.

This is an uncharacterized protein from Escherichia coli (strain K12).